The chain runs to 153 residues: uncharacterized protein (153 aa).

Belongs to the RusA family.

This is an uncharacterized protein from Xylella fastidiosa (strain Temecula1 / ATCC 700964).